A 131-amino-acid chain; its full sequence is Arsenate reductase 2 (131 aa).

Catalysis depends on nucleophile residues Cys-10, Cys-82, and Cys-89. Cystine bridges form between Cys-10-Cys-82 and Cys-82-Cys-89.

This sequence belongs to the low molecular weight phosphotyrosine protein phosphatase family. Thioredoxin-coupled ArsC subfamily.

Its subcellular location is the cytoplasm. The enzyme catalyses arsenate + [thioredoxin]-dithiol + H(+) = arsenite + [thioredoxin]-disulfide + H2O. Its function is as follows. Catalyzes the reduction of arsenate [As(V)] to arsenite [As(III)]. This Staphylococcus haemolyticus (strain JCSC1435) protein is Arsenate reductase 2.